We begin with the raw amino-acid sequence, 513 residues long: L-threonine dehydratase biosynthetic IlvA (513 aa).

Lys61 is subject to N6-(pyridoxal phosphate)lysine. Residues Asn88, Gly187–Leu191, and Ser314 contribute to the pyridoxal 5'-phosphate site. 2 consecutive ACT-like domains span residues Ala338 to Asn409 and Arg432 to Glu504.

It belongs to the serine/threonine dehydratase family. In terms of assembly, homotetramer. The cofactor is pyridoxal 5'-phosphate.

The catalysed reaction is L-threonine = 2-oxobutanoate + NH4(+). The protein operates within amino-acid biosynthesis; L-isoleucine biosynthesis; 2-oxobutanoate from L-threonine: step 1/1. Its function is as follows. Catalyzes the anaerobic formation of alpha-ketobutyrate and ammonia from threonine in a two-step reaction. The first step involved a dehydration of threonine and a production of enamine intermediates (aminocrotonate), which tautomerizes to its imine form (iminobutyrate). Both intermediates are unstable and short-lived. The second step is the nonenzymatic hydrolysis of the enamine/imine intermediates to form 2-ketobutyrate and free ammonia. In the low water environment of the cell, the second step is accelerated by RidA. The polypeptide is L-threonine dehydratase biosynthetic IlvA (ilvA) (Pasteurella multocida (strain Pm70)).